The following is a 428-amino-acid chain: Adenylosuccinate synthetase (428 aa).

GTP contacts are provided by residues glycine 12–lysine 18 and glycine 40–threonine 42. Aspartate 13 serves as the catalytic Proton acceptor. The Mg(2+) site is built by aspartate 13 and glycine 40. Residues aspartate 13–lysine 16, asparagine 38–histidine 41, threonine 130, arginine 144, glutamine 225, threonine 240, and arginine 304 contribute to the IMP site. Histidine 41 serves as the catalytic Proton donor. Position 300–306 (valine 300–arginine 306) interacts with substrate. GTP-binding positions include arginine 306, lysine 332–aspartate 334, and serine 414–glycine 416.

It belongs to the adenylosuccinate synthetase family. Homodimer. The cofactor is Mg(2+).

Its subcellular location is the cytoplasm. It catalyses the reaction IMP + L-aspartate + GTP = N(6)-(1,2-dicarboxyethyl)-AMP + GDP + phosphate + 2 H(+). It participates in purine metabolism; AMP biosynthesis via de novo pathway; AMP from IMP: step 1/2. In terms of biological role, plays an important role in the de novo pathway of purine nucleotide biosynthesis. Catalyzes the first committed step in the biosynthesis of AMP from IMP. This Clostridium botulinum (strain Okra / Type B1) protein is Adenylosuccinate synthetase.